The primary structure comprises 34 residues: Trypsin inhibitor (34 aa).

2 cysteine pairs are disulfide-bonded: Cys-7–Cys-29 and Cys-11–Cys-25.

It is found in the secreted. Inhibits trypsin. The sequence is that of Trypsin inhibitor from Veronica hederifolia (Ivy-leaved speedwell).